We begin with the raw amino-acid sequence, 156 residues long: 6,7-dimethyl-8-ribityllumazine synthase (156 aa).

5-amino-6-(D-ribitylamino)uracil is bound by residues Phe-24, 58-60 (AFE), and 82-84 (VII). 87–88 (ST) is a (2S)-2-hydroxy-3-oxobutyl phosphate binding site. The active-site Proton donor is His-90. A 5-amino-6-(D-ribitylamino)uracil-binding site is contributed by Phe-115. Arg-129 is a (2S)-2-hydroxy-3-oxobutyl phosphate binding site.

The protein belongs to the DMRL synthase family.

The catalysed reaction is (2S)-2-hydroxy-3-oxobutyl phosphate + 5-amino-6-(D-ribitylamino)uracil = 6,7-dimethyl-8-(1-D-ribityl)lumazine + phosphate + 2 H2O + H(+). The protein operates within cofactor biosynthesis; riboflavin biosynthesis; riboflavin from 2-hydroxy-3-oxobutyl phosphate and 5-amino-6-(D-ribitylamino)uracil: step 1/2. Catalyzes the formation of 6,7-dimethyl-8-ribityllumazine by condensation of 5-amino-6-(D-ribitylamino)uracil with 3,4-dihydroxy-2-butanone 4-phosphate. This is the penultimate step in the biosynthesis of riboflavin. The protein is 6,7-dimethyl-8-ribityllumazine synthase of Chlorobaculum parvum (strain DSM 263 / NCIMB 8327) (Chlorobium vibrioforme subsp. thiosulfatophilum).